Consider the following 289-residue polypeptide: Ribosomal protein L11 methyltransferase (289 aa).

4 residues coordinate S-adenosyl-L-methionine: Thr134, Gly155, Asp177, and Asn225.

This sequence belongs to the methyltransferase superfamily. PrmA family.

Its subcellular location is the cytoplasm. It catalyses the reaction L-lysyl-[protein] + 3 S-adenosyl-L-methionine = N(6),N(6),N(6)-trimethyl-L-lysyl-[protein] + 3 S-adenosyl-L-homocysteine + 3 H(+). Functionally, methylates ribosomal protein L11. The protein is Ribosomal protein L11 methyltransferase of Parasynechococcus marenigrum (strain WH8102).